Here is a 389-residue protein sequence, read N- to C-terminus: tRNA-specific 2-thiouridylase MnmA (389 aa).

ATP is bound by residues 35–42 and M61; that span reads GMSGGVDS. The tract at residues 121-123 is interaction with target base in tRNA; that stretch reads NPD. Catalysis depends on C126, which acts as the Nucleophile. A disulfide bridge links C126 with C223. G151 contributes to the ATP binding site. Residues 173–175 form an interaction with tRNA region; that stretch reads KDQ. C223 functions as the Cysteine persulfide intermediate in the catalytic mechanism. An interaction with tRNA region spans residues 335 to 336; that stretch reads RY.

It belongs to the MnmA/TRMU family.

The protein localises to the cytoplasm. The catalysed reaction is S-sulfanyl-L-cysteinyl-[protein] + uridine(34) in tRNA + AH2 + ATP = 2-thiouridine(34) in tRNA + L-cysteinyl-[protein] + A + AMP + diphosphate + H(+). In terms of biological role, catalyzes the 2-thiolation of uridine at the wobble position (U34) of tRNA, leading to the formation of s(2)U34. The polypeptide is tRNA-specific 2-thiouridylase MnmA (Mannheimia succiniciproducens (strain KCTC 0769BP / MBEL55E)).